A 290-amino-acid chain; its full sequence is Ribosomal RNA small subunit methyltransferase A (290 aa).

The S-adenosyl-L-methionine site is built by N27, L29, G54, E75, D100, and N125.

This sequence belongs to the class I-like SAM-binding methyltransferase superfamily. rRNA adenine N(6)-methyltransferase family. RsmA subfamily.

Its subcellular location is the cytoplasm. The enzyme catalyses adenosine(1518)/adenosine(1519) in 16S rRNA + 4 S-adenosyl-L-methionine = N(6)-dimethyladenosine(1518)/N(6)-dimethyladenosine(1519) in 16S rRNA + 4 S-adenosyl-L-homocysteine + 4 H(+). Functionally, specifically dimethylates two adjacent adenosines (A1518 and A1519) in the loop of a conserved hairpin near the 3'-end of 16S rRNA in the 30S particle. May play a critical role in biogenesis of 30S subunits. This Streptococcus equi subsp. zooepidemicus (strain H70) protein is Ribosomal RNA small subunit methyltransferase A.